Consider the following 249-residue polypeptide: Methyl-coenzyme M reductase subunit gamma (249 aa).

Residues 43–62 (RAPGEEYPSVHPPLEELDEP) form a disordered region. R120 lines the coenzyme M pocket.

This sequence belongs to the methyl-coenzyme M reductase gamma subunit family. MCR is a hexamer of two alpha, two beta, and two gamma chains, forming a dimer of heterotrimers. The cofactor is coenzyme F430.

The protein localises to the cytoplasm. It catalyses the reaction coenzyme B + methyl-coenzyme M = methane + coenzyme M-coenzyme B heterodisulfide. Its pathway is one-carbon metabolism; methyl-coenzyme M reduction; methane from methyl-coenzyme M: step 1/1. In terms of biological role, component of the methyl-coenzyme M reductase (MCR) I that catalyzes the reductive cleavage of methyl-coenzyme M (CoM-S-CH3 or 2-(methylthio)ethanesulfonate) using coenzyme B (CoB or 7-mercaptoheptanoylthreonine phosphate) as reductant which results in the production of methane and the mixed heterodisulfide of CoB and CoM (CoM-S-S-CoB). This is the final step in methanogenesis. This chain is Methyl-coenzyme M reductase subunit gamma (mcrG), found in Methanothermus fervidus.